We begin with the raw amino-acid sequence, 174 residues long: Ribosome maturation factor RimM (174 aa).

The PRC barrel domain occupies 95 to 174 (DDEFYWRDLI…QIQVEWPSDF (80 aa)).

Belongs to the RimM family. Binds ribosomal protein uS19.

Its subcellular location is the cytoplasm. Functionally, an accessory protein needed during the final step in the assembly of 30S ribosomal subunit, possibly for assembly of the head region. Essential for efficient processing of 16S rRNA. May be needed both before and after RbfA during the maturation of 16S rRNA. It has affinity for free ribosomal 30S subunits but not for 70S ribosomes. This Idiomarina loihiensis (strain ATCC BAA-735 / DSM 15497 / L2-TR) protein is Ribosome maturation factor RimM.